A 363-amino-acid chain; its full sequence is S-adenosylmethionine decarboxylase proenzyme (363 aa).

Active-site residues include glutamate 9 and glutamate 12. Serine 69 acts as the Schiff-base intermediate with substrate; via pyruvic acid in catalysis. At serine 69 the chain carries Pyruvic acid (Ser); by autocatalysis. Cysteine 83 acts as the Proton donor; for catalytic activity in catalysis. Active-site proton acceptor; for processing activity residues include serine 232 and histidine 245.

The protein belongs to the eukaryotic AdoMetDC family. Pyruvate is required as a cofactor. Post-translationally, is synthesized initially as an inactive proenzyme. Formation of the active enzyme involves a self-maturation process in which the active site pyruvoyl group is generated from an internal serine residue via an autocatalytic post-translational modification. Two non-identical subunits are generated from the proenzyme in this reaction, and the pyruvate is formed at the N-terminus of the alpha chain, which is derived from the carboxyl end of the proenzyme. The post-translation cleavage follows an unusual pathway, termed non-hydrolytic serinolysis, in which the side chain hydroxyl group of the serine supplies its oxygen atom to form the C-terminus of the beta chain, while the remainder of the serine residue undergoes an oxidative deamination to produce ammonia and the pyruvoyl group blocking the N-terminus of the alpha chain.

It carries out the reaction S-adenosyl-L-methionine + H(+) = S-adenosyl 3-(methylsulfanyl)propylamine + CO2. It participates in amine and polyamine biosynthesis; S-adenosylmethioninamine biosynthesis; S-adenosylmethioninamine from S-adenosyl-L-methionine: step 1/1. The chain is S-adenosylmethionine decarboxylase proenzyme (SAMDC) from Spinacia oleracea (Spinach).